The sequence spans 208 residues: Transmembrane emp24 domain-containing protein p24beta2 (208 aa).

Positions 1–21 are cleaved as a signal peptide; that stretch reads MSLKGTIVLLGLLWSFQATLG. At 22–176 the chain is on the lumenal side; the sequence is IRFVIDREEC…ENMSKRAVHK (155 aa). The GOLD domain occupies 29 to 116; the sequence is EECFSHKAEY…HETIDFDVQL (88 aa). Positions 134–149 form a coiled coil; the sequence is LMEQISKLEEALYNIQ. N168 is a glycosylation site (N-linked (GlcNAc...) asparagine). The chain crosses the membrane as a helical span at residues 177-195; it reads ALFESFALIGASFLQVYLL. Residues 196 to 208 lie on the Cytoplasmic side of the membrane; that stretch reads RRLFERKLGMSRV. The COPII vesicle coat-binding signature appears at 198-199; that stretch reads LF. A COPI vesicle coat-binding motif is present at residues 198 to 208; that stretch reads LFERKLGMSRV. A Required for the export from the endoplasmic reticulum to the Golgi motif is present at residues 207 to 208; it reads RV.

This sequence belongs to the EMP24/GP25L family. In terms of assembly, probably oligomerizes with other members of the EMP24/GP25L family. Associates with the COPI vesicle coat (coatomer). Associates with the COPII vesicle coat (coatomer). Interacts with p24delta5.

It is found in the golgi apparatus. Its subcellular location is the cis-Golgi network membrane. It localises to the golgi stack membrane. Its function is as follows. Involved in vesicular protein trafficking. Mainly functions in the early secretory pathway but also in post-Golgi membranes. Thought to act as cargo receptor at the lumenal side for incorporation of secretory cargo molecules into transport vesicles and to be involved in vesicle coat formation at the cytoplasmic side. Interacts with p24delta5 at endoplasmic reticulum export sites for endoplasmic reticulum exit and coupled transport to the Golgi apparatus. This chain is Transmembrane emp24 domain-containing protein p24beta2, found in Arabidopsis thaliana (Mouse-ear cress).